The following is a 730-amino-acid chain: Jacalin-related lectin 5 (730 aa).

A Jacalin-type lectin 1 domain is found at 1 to 126 (MSWDDGKHTK…LNSIDAHFAP (126 aa)). Residues 121–450 (DAHFAPAPPP…GNQWDDGTDH (330 aa)) are disordered. Composition is skewed to low complexity over residues 138-153 (GASG…GSAG), 168-179 (AGGSKPSSGSAG), 196-207 (AGGSKPSSGSAG), and 248-261 (TEKN…SSGS). Polar residues predominate over residues 275–307 (ETVSNIGDTESNAGGSKSNDGANNGASGIESNA). A compositionally biased stretch (gly residues) spans 314–323 (FGAGGTGGIG). Over residues 343 to 358 (DGASGIGSNDGSTGTN) the composition is skewed to low complexity. Composition is skewed to polar residues over residues 366–375 (DSNIEGTENN) and 388–416 (IGNS…TGGK). The span at 417–429 (ESNTGSESNTNSS) shows a compositional bias: low complexity. Jacalin-type lectin domains are found at residues 430–572 (PQKL…YFVP) and 584–727 (PNKV…YFIP).

Belongs to the jacalin lectin family.

The protein is Jacalin-related lectin 5 (JAL5) of Arabidopsis thaliana (Mouse-ear cress).